The primary structure comprises 87 residues: U3-theraphotoxin-Hhn1j (87 aa).

The signal sequence occupies residues 1–24 (MVNMKASMFLTFAGLVLLFVVCYA). A propeptide spanning residues 25 to 52 (SESEEKEFPKEMLSSIFAVDNDFKQEER) is cleaved from the precursor. 3 disulfide bridges follow: C54/C67, C61/C72, and C66/C79.

Belongs to the neurotoxin 10 (Hwtx-1) family. 51 (Hntx-8) subfamily. Hntx-8 sub-subfamily. In terms of tissue distribution, expressed by the venom gland.

It is found in the secreted. Its function is as follows. Ion channel inhibitor. The sequence is that of U3-theraphotoxin-Hhn1j from Cyriopagopus hainanus (Chinese bird spider).